Consider the following 338-residue polypeptide: Lipoate-protein ligase A (338 aa).

Positions 29–216 constitute a BPL/LPL catalytic domain; the sequence is PATQRVLFLW…AFFAHYGERV (188 aa). Residues Arg71, 76-79, and Lys134 each bind ATP; that span reads GAVF. (R)-lipoate is bound at residue Lys134.

The protein belongs to the LplA family. As to quaternary structure, monomer.

The protein localises to the cytoplasm. It carries out the reaction L-lysyl-[lipoyl-carrier protein] + (R)-lipoate + ATP = N(6)-[(R)-lipoyl]-L-lysyl-[lipoyl-carrier protein] + AMP + diphosphate + H(+). The protein operates within protein modification; protein lipoylation via exogenous pathway; protein N(6)-(lipoyl)lysine from lipoate: step 1/2. Its pathway is protein modification; protein lipoylation via exogenous pathway; protein N(6)-(lipoyl)lysine from lipoate: step 2/2. Functionally, catalyzes both the ATP-dependent activation of exogenously supplied lipoate to lipoyl-AMP and the transfer of the activated lipoyl onto the lipoyl domains of lipoate-dependent enzymes. In Escherichia coli (strain 55989 / EAEC), this protein is Lipoate-protein ligase A.